We begin with the raw amino-acid sequence, 354 residues long: G protein alpha o subunit (354 aa).

A lipid anchor (N-myristoyl glycine) is attached at G2. C3 carries S-palmitoyl cysteine lipidation. One can recognise a G-alpha domain in the interval K32–Y354. The G1 motif stretch occupies residues K35–T48. GTP contacts are provided by residues G40–S47, L176–T182, D201–Q205, N270–D273, and A326. Residues S47 and T182 each coordinate Mg(2+). The G2 motif stretch occupies residues D174–T182. The tract at residues F197–R206 is G3 motif. The G4 motif stretch occupies residues I266 to D273. The interval T324–T329 is G5 motif.

Belongs to the G-alpha family. G(i/o/t/z) subfamily. G proteins are composed of 3 units; alpha, beta and gamma. The alpha chain contains the guanine nucleotide binding site. Expressed primarily in neuronal cell bodies in the brain, optic lobe, and thoracic and abdominal ganglia. Also expressed in antenna, oocytes and ovarian nurse cells.

In terms of biological role, guanine nucleotide-binding proteins (G proteins) are involved as modulators or transducers in various transmembrane signaling systems. Plays a role in glial cell differentiation during embryogenesis; loco, Galphai and the G-protein coupled receptor, moody, are required in the surface glia to achieve effective insulation of the nerve cord. This chain is G protein alpha o subunit (Galphao), found in Drosophila melanogaster (Fruit fly).